Consider the following 391-residue polypeptide: Arginine biosynthesis bifunctional protein ArgJ (391 aa).

Thr-149, Lys-172, Thr-183, Glu-263, Asn-386, and Ser-391 together coordinate substrate. Thr-183 functions as the Nucleophile in the catalytic mechanism.

The protein belongs to the ArgJ family. Heterotetramer of two alpha and two beta chains.

It localises to the cytoplasm. The enzyme catalyses N(2)-acetyl-L-ornithine + L-glutamate = N-acetyl-L-glutamate + L-ornithine. It carries out the reaction L-glutamate + acetyl-CoA = N-acetyl-L-glutamate + CoA + H(+). Its pathway is amino-acid biosynthesis; L-arginine biosynthesis; L-ornithine and N-acetyl-L-glutamate from L-glutamate and N(2)-acetyl-L-ornithine (cyclic): step 1/1. It functions in the pathway amino-acid biosynthesis; L-arginine biosynthesis; N(2)-acetyl-L-ornithine from L-glutamate: step 1/4. Its function is as follows. Catalyzes two activities which are involved in the cyclic version of arginine biosynthesis: the synthesis of N-acetylglutamate from glutamate and acetyl-CoA as the acetyl donor, and of ornithine by transacetylation between N(2)-acetylornithine and glutamate. This chain is Arginine biosynthesis bifunctional protein ArgJ, found in Bifidobacterium longum (strain NCC 2705).